The primary structure comprises 108 residues: SPbeta prophage-derived uncharacterized HTH-type transcriptional regulator YonR (108 aa).

The region spanning 6–60 (LKKCRTSKGYSQQRMADFLGITRQGYGKYEIGKAEPDLKTLTKLSNILGVSTDFL) is the HTH cro/C1-type domain. The segment at residues 17–36 (QQRMADFLGITRQGYGKYEI) is a DNA-binding region (H-T-H motif).

The sequence is that of SPbeta prophage-derived uncharacterized HTH-type transcriptional regulator YonR (yonR) from Bacillus subtilis (strain 168).